The sequence spans 149 residues: Nucleoside diphosphate kinase (149 aa).

ATP contacts are provided by K9, F57, R85, T91, R102, and N112. The active-site Pros-phosphohistidine intermediate is H115.

The protein belongs to the NDK family. The cofactor is Mg(2+).

The protein localises to the cytoplasm. The enzyme catalyses a 2'-deoxyribonucleoside 5'-diphosphate + ATP = a 2'-deoxyribonucleoside 5'-triphosphate + ADP. It catalyses the reaction a ribonucleoside 5'-diphosphate + ATP = a ribonucleoside 5'-triphosphate + ADP. In terms of biological role, major role in the synthesis of nucleoside triphosphates other than ATP. The ATP gamma phosphate is transferred to the NDP beta phosphate via a ping-pong mechanism, using a phosphorylated active-site intermediate. In Methanococcoides burtonii (strain DSM 6242 / NBRC 107633 / OCM 468 / ACE-M), this protein is Nucleoside diphosphate kinase.